The chain runs to 464 residues: 3-isopropylmalate dehydratase large subunit (464 aa).

3 residues coordinate [4Fe-4S] cluster: C345, C405, and C408.

It belongs to the aconitase/IPM isomerase family. LeuC type 1 subfamily. Heterodimer of LeuC and LeuD. [4Fe-4S] cluster serves as cofactor.

The catalysed reaction is (2R,3S)-3-isopropylmalate = (2S)-2-isopropylmalate. Its pathway is amino-acid biosynthesis; L-leucine biosynthesis; L-leucine from 3-methyl-2-oxobutanoate: step 2/4. Catalyzes the isomerization between 2-isopropylmalate and 3-isopropylmalate, via the formation of 2-isopropylmaleate. This chain is 3-isopropylmalate dehydratase large subunit, found in Flavobacterium johnsoniae (strain ATCC 17061 / DSM 2064 / JCM 8514 / BCRC 14874 / CCUG 350202 / NBRC 14942 / NCIMB 11054 / UW101) (Cytophaga johnsonae).